Here is a 267-residue protein sequence, read N- to C-terminus: Formamidopyrimidine-DNA glycosylase (267 aa).

P2 serves as the catalytic Schiff-base intermediate with DNA. E3 functions as the Proton donor in the catalytic mechanism. K53 (proton donor; for beta-elimination activity) is an active-site residue. The DNA site is built by H82 and R100. Residues A230–G264 form an FPG-type zinc finger. The active-site Proton donor; for delta-elimination activity is the R254.

This sequence belongs to the FPG family. As to quaternary structure, monomer. It depends on Zn(2+) as a cofactor.

The enzyme catalyses Hydrolysis of DNA containing ring-opened 7-methylguanine residues, releasing 2,6-diamino-4-hydroxy-5-(N-methyl)formamidopyrimidine.. It catalyses the reaction 2'-deoxyribonucleotide-(2'-deoxyribose 5'-phosphate)-2'-deoxyribonucleotide-DNA = a 3'-end 2'-deoxyribonucleotide-(2,3-dehydro-2,3-deoxyribose 5'-phosphate)-DNA + a 5'-end 5'-phospho-2'-deoxyribonucleoside-DNA + H(+). Functionally, involved in base excision repair of DNA damaged by oxidation or by mutagenic agents. Acts as a DNA glycosylase that recognizes and removes damaged bases. Has a preference for oxidized purines, such as 7,8-dihydro-8-oxoguanine (8-oxoG). Has AP (apurinic/apyrimidinic) lyase activity and introduces nicks in the DNA strand. Cleaves the DNA backbone by beta-delta elimination to generate a single-strand break at the site of the removed base with both 3'- and 5'-phosphates. The protein is Formamidopyrimidine-DNA glycosylase of Thermus thermophilus (strain ATCC BAA-163 / DSM 7039 / HB27).